We begin with the raw amino-acid sequence, 263 residues long: 3-methyl-2-oxobutanoate hydroxymethyltransferase (263 aa).

Residues Asp-43 and Asp-82 each contribute to the Mg(2+) site. 3-methyl-2-oxobutanoate contacts are provided by residues 43–44 (DS), Asp-82, and Lys-111. Residue Glu-113 coordinates Mg(2+). The active-site Proton acceptor is Glu-179.

It belongs to the PanB family. Homodecamer; pentamer of dimers. It depends on Mg(2+) as a cofactor.

It is found in the cytoplasm. The catalysed reaction is 3-methyl-2-oxobutanoate + (6R)-5,10-methylene-5,6,7,8-tetrahydrofolate + H2O = 2-dehydropantoate + (6S)-5,6,7,8-tetrahydrofolate. Its pathway is cofactor biosynthesis; (R)-pantothenate biosynthesis; (R)-pantoate from 3-methyl-2-oxobutanoate: step 1/2. Functionally, catalyzes the reversible reaction in which hydroxymethyl group from 5,10-methylenetetrahydrofolate is transferred onto alpha-ketoisovalerate to form ketopantoate. This chain is 3-methyl-2-oxobutanoate hydroxymethyltransferase, found in Neisseria meningitidis serogroup A / serotype 4A (strain DSM 15465 / Z2491).